The chain runs to 562 residues: RNA N(6)-adenosine-methyltransferase METTL16 (562 aa).

Residues 17–20 (PPDF) form an RNA-binding region. S-adenosyl-L-methionine-binding residues include Arg-82, Gly-110, Ser-114, Glu-133, Thr-164, and Asn-184. A K-loop region spans residues 163–167 (KTLLM). RNA-binding regions lie at residues 199-211 (SRNP…SSVN), 250-254 (GKKCS), and 277-283 (QGRTMRW). A VCR 1 region spans residues 289-400 (FYDDVTVPSP…QLREVPRAPE (112 aa)). At Ser-329 the chain carries Phosphoserine. The segment covering 402–413 (VIQALEEKKPTP) has biased composition (basic and acidic residues). Residues 402–498 (VIQALEEKKP…DQEASEQFGS (97 aa)) form a disordered region. Positions 458-467 (ENPEPTEDER) are enriched in acidic residues. Position 463 is a phosphothreonine (Thr-463). Positions 480–496 (CQGSSNGAQDQEASEQF) are enriched in polar residues. Residues 514–562 (YLFKCLINVKKEVDDALVEMHWVEGQNRDLMNQLCTYIRNQIFRLVAVN) are VCR 2.

Belongs to the methyltransferase superfamily. METTL16/RlmF family. Interacts with MEPCE. Interacts with LARP7.

Its subcellular location is the nucleus. It is found in the cytoplasm. The catalysed reaction is adenosine in U6 snRNA + S-adenosyl-L-methionine = N(6)-methyladenosine in U6 snRNA + S-adenosyl-L-homocysteine + H(+). The enzyme catalyses an adenosine in mRNA + S-adenosyl-L-methionine = an N(6)-methyladenosine in mRNA + S-adenosyl-L-homocysteine + H(+). With respect to regulation, methyltransferase activity is autoinhibited by the K-loop region that blocks S-adenosyl-L-methionine-binding. Upon activation, K-loop changes conformation, allowing S-adenosyl-L-methionine-binding and subsequent methyltransferase activity. mRNA N6-adenosine-methyltransferase activity is inhibited by zinc. RNA N6-methyltransferase that methylates adenosine residues at the N(6) position of a subset of RNAs and is involved in S-adenosyl-L-methionine homeostasis by regulating expression of MAT2A transcripts. Able to N6-methylate a subset of mRNAs and U6 small nuclear RNAs (U6 snRNAs). In contrast to the METTL3-METTL14 heterodimer, only able to methylate a limited number of RNAs: requires both a 5'UACAGAGAA-3' nonamer sequence and a specific RNA structure. Plays a key role in S-adenosyl-L-methionine homeostasis by mediating N6-methylation of MAT2A mRNAs, altering splicing of MAT2A transcripts: in presence of S-adenosyl-L-methionine, binds the 3'-UTR region of MAT2A mRNA and specifically N6-methylates the first hairpin of MAT2A mRNA, preventing recognition of their 3'-splice site by U2AF1/U2AF35, thereby inhibiting splicing and protein production of S-adenosylmethionine synthase. In S-adenosyl-L-methionine-limiting conditions, binds the 3'-UTR region of MAT2A mRNA but stalls due to the lack of a methyl donor, preventing N6-methylation and promoting expression of MAT2A. In addition to mRNAs, also able to mediate N6-methylation of U6 small nuclear RNA (U6 snRNA): specifically N6-methylates adenine in position 43 of U6 snRNAs. Also able to bind various lncRNAs, such as 7SK snRNA (7SK RNA) or 7SL RNA. Specifically binds the 3'-end of the MALAT1 long non-coding RNA. This is RNA N(6)-adenosine-methyltransferase METTL16 from Homo sapiens (Human).